A 225-amino-acid polypeptide reads, in one-letter code: Leucyl/phenylalanyl-tRNA--protein transferase (225 aa).

Belongs to the L/F-transferase family.

The protein resides in the cytoplasm. It carries out the reaction N-terminal L-lysyl-[protein] + L-leucyl-tRNA(Leu) = N-terminal L-leucyl-L-lysyl-[protein] + tRNA(Leu) + H(+). The catalysed reaction is N-terminal L-arginyl-[protein] + L-leucyl-tRNA(Leu) = N-terminal L-leucyl-L-arginyl-[protein] + tRNA(Leu) + H(+). The enzyme catalyses L-phenylalanyl-tRNA(Phe) + an N-terminal L-alpha-aminoacyl-[protein] = an N-terminal L-phenylalanyl-L-alpha-aminoacyl-[protein] + tRNA(Phe). Its function is as follows. Functions in the N-end rule pathway of protein degradation where it conjugates Leu, Phe and, less efficiently, Met from aminoacyl-tRNAs to the N-termini of proteins containing an N-terminal arginine or lysine. This Gluconobacter oxydans (strain 621H) (Gluconobacter suboxydans) protein is Leucyl/phenylalanyl-tRNA--protein transferase.